Consider the following 254-residue polypeptide: 3-oxo-5-alpha-steroid 4-dehydrogenase 2 (254 aa).

Helical transmembrane passes span V8–G28, P72–F92, F146–T166, and L206–M226.

The protein belongs to the steroid 5-alpha reductase family. In terms of tissue distribution, expressed in high levels in the prostate and many other androgen-sensitive tissues.

It localises to the microsome membrane. The protein localises to the endoplasmic reticulum membrane. The enzyme catalyses a 3-oxo-5alpha-steroid + NADP(+) = a 3-oxo-Delta(4)-steroid + NADPH + H(+). The catalysed reaction is 17beta-hydroxy-5alpha-androstan-3-one + NADP(+) = testosterone + NADPH + H(+). It carries out the reaction 5alpha-pregnane-3,20-dione + NADP(+) = progesterone + NADPH + H(+). Functionally, converts testosterone (T) into 5-alpha-dihydrotestosterone (DHT) and progesterone or corticosterone into their corresponding 5-alpha-3-oxosteroids. It plays a central role in sexual differentiation and androgen physiology. This is 3-oxo-5-alpha-steroid 4-dehydrogenase 2 (Srd5a2) from Rattus norvegicus (Rat).